Reading from the N-terminus, the 240-residue chain is Ribonuclease HII (240 aa).

An RNase H type-2 domain is found at 31–222 (RLIAGVDEAG…VRRALGLETA (192 aa)). A divalent metal cation contacts are provided by Asp-37, Glu-38, and Asp-130.

This sequence belongs to the RNase HII family. It depends on Mn(2+) as a cofactor. Mg(2+) serves as cofactor.

It localises to the cytoplasm. It catalyses the reaction Endonucleolytic cleavage to 5'-phosphomonoester.. Its function is as follows. Endonuclease that specifically degrades the RNA of RNA-DNA hybrids. The chain is Ribonuclease HII from Xanthomonas campestris pv. campestris (strain 8004).